The chain runs to 569 residues: Formate--tetrahydrofolate ligase (569 aa).

64-71 (TPHGEGKT) serves as a coordination point for ATP.

Belongs to the formate--tetrahydrofolate ligase family.

It carries out the reaction (6S)-5,6,7,8-tetrahydrofolate + formate + ATP = (6R)-10-formyltetrahydrofolate + ADP + phosphate. It participates in one-carbon metabolism; tetrahydrofolate interconversion. The sequence is that of Formate--tetrahydrofolate ligase from Shewanella sp. (strain MR-7).